The following is a 71-amino-acid chain: Beta-defensin 25 (71 aa).

Residues 1–22 form the signal peptide; sequence MAKWILLIVALLVLGHVPSGST. Cystine bridges form between Cys-27-Cys-54, Cys-34-Cys-48, and Cys-38-Cys-55.

This sequence belongs to the beta-defensin family.

The protein resides in the secreted. Has antibacterial activity. This Rattus norvegicus (Rat) protein is Beta-defensin 25 (Defb25).